We begin with the raw amino-acid sequence, 446 residues long: DNA repair protein RadA (446 aa).

The C4-type zinc-finger motif lies at 10-27 (CQACGNQQSKWLGKCPDC). 96–103 (GSPGVGKS) is a binding site for ATP. The short motif at 253 to 257 (KNRFG) is the RadA KNRFG motif element. The interval 349-446 (DVFVNISGGV…KELSQVLEWM (98 aa)) is lon-protease-like.

It belongs to the RecA family. RadA subfamily.

Functionally, DNA-dependent ATPase involved in processing of recombination intermediates, plays a role in repairing DNA breaks. Stimulates the branch migration of RecA-mediated strand transfer reactions, allowing the 3' invading strand to extend heteroduplex DNA faster. Binds ssDNA in the presence of ADP but not other nucleotides, has ATPase activity that is stimulated by ssDNA and various branched DNA structures, but inhibited by SSB. Does not have RecA's homology-searching function. The protein is DNA repair protein RadA of Campylobacter jejuni subsp. jejuni serotype O:2 (strain ATCC 700819 / NCTC 11168).